The primary structure comprises 1325 residues: Nephrocystin-3 (1325 aa).

A disordered region spans residues 1–20 (MGTASSLVSPTGGEVIEDTY). G2 carries the N-myristoyl glycine lipid modification. Residues 107 to 203 (SMGRREAKLD…QRLQAQGIQV (97 aa)) are a coiled coil. TPR repeat units lie at residues 467–500 (TPEEDDFGDVLWDIHDEQEQMEAFQQTSSSAHEL), 881–914 (CLLNLLVAQNLYKRGHFAELLSYWQFVGKDKGAM), 916–937 (TEYFESLKQYENSEGEENMLCL), 938–971 (ADLYETLGRFLKDLGLLSQAVVPLQRSLEIRETA), 980–1013 (AQSLHQLAGVYVQWKKFGDAEQLYKQALEISENA), 1022–1055 (ARELEALATLYHKQNKYEQAEHFRKKSVIIRQQA), 1088–1121 (ARTLNELGVLYFLQNNLETAEQFLKRSLEMRERV), 1130–1163 (AQSLNNLAALCNEKKQYEKAEELYERALDIRRRA), 1172–1205 (AYTVKHLAILYKKTGKVDKAVPLYELAVEIRQKS), 1214–1247 (ATALVNLAVLHSQMKKHSEALPLYERALKIYEDS), and 1256–1289 (GETLKNLAVLSYEEGNFEKAAELYKRAMEIKEAE). Residues 1293–1325 (LGGKAPSRQSSSGDTFLFKTTHSPNVFLPQGQS) form a disordered region. Polar residues predominate over residues 1299–1325 (SRQSSSGDTFLFKTTHSPNVFLPQGQS).

In terms of assembly, interacts with NPHP1 and INVS/NPHP2. Interacts (when myristoylated) with UNC119 and UNC119B; interaction is required for localization to cilium. Interacts with CEP164. Component of a complex containing at least ANKS6, INVS, NEK8 and NPHP3. ANKS6 may organize complex assembly by linking INVS and NPHP3 to NEK8 and INVS may target the complex to the proximal ciliary axoneme.

It localises to the cell projection. It is found in the cilium. Functionally, required for normal ciliary development and function. Inhibits disheveled-1-induced canonical Wnt-signaling activity and may also play a role in the control of non-canonical Wnt signaling that regulates planar cell polarity. Probably acts as a molecular switch between different Wnt signaling pathways. Required for proper convergent extension cell movements. This Mus musculus (Mouse) protein is Nephrocystin-3 (Nphp3).